A 158-amino-acid chain; its full sequence is Ribosome maturation factor RimP (158 aa).

Belongs to the RimP family.

Its subcellular location is the cytoplasm. Functionally, required for maturation of 30S ribosomal subunits. This is Ribosome maturation factor RimP from Pseudomonas savastanoi pv. phaseolicola (strain 1448A / Race 6) (Pseudomonas syringae pv. phaseolicola (strain 1448A / Race 6)).